Consider the following 393-residue polypeptide: Fractalkine (393 aa).

The N-terminal stretch at 1-24 (MAPSQLAWLLRLAAFFHLCTLLAG) is a signal peptide. The interval 25-100 (QHLGMTKCNI…HQTAALTRNG (76 aa)) is chemokine and involved in interaction with ITGAV:ITGB3 and ITGA4:ITGB1. The Extracellular segment spans residues 25 to 337 (QHLGMTKCNI…PDSQAATRRQ (313 aa)). Cystine bridges form between Cys-32–Cys-58 and Cys-36–Cys-74. Asn-33 is a glycosylation site (N-linked (GlcNAc...) asparagine). Positions 101 to 337 (GKFEKRVDNV…PDSQAATRRQ (237 aa)) are mucin-like stalk. Disordered regions lie at residues 114-184 (ITSA…PQST) and 213-303 (EKAT…SGSQ). 2 stretches are compositionally biased toward polar residues: residues 153–172 (GTSQ…TSKA) and 223–240 (ALST…NVGS). The helical transmembrane segment at 338–358 (AVGLLAFLGLLFCLGVAMFAY) threads the bilayer. Residues 359 to 393 (QSLQGCPRKMAGEMVEGLRYVPRSCGSNSYVLVPV) are Cytoplasmic-facing.

This sequence belongs to the intercrine delta family. As to quaternary structure, monomer. Forms a ternary complex with CX3CR1 and ITGAV:ITGB3 or ITGA4:ITGB1. In terms of processing, a soluble short form may be released by proteolytic cleavage from the long membrane-anchored form. Highest levels in brain (neurons). Significant levels in kidney, heart, lung and adrenal gland.

It localises to the cell membrane. Its subcellular location is the secreted. Chemokine that acts as a ligand for both CX3CR1 and integrins ITGAV:ITGB3 and ITGA4:ITGB1. The CX3CR1-CX3CL1 signaling exerts distinct functions in different tissue compartments, such as immune response, inflammation, cell adhesion and chemotaxis. Regulates leukocyte adhesion and migration processes at the endothelium. Can activate integrins in both a CX3CR1-dependent and CX3CR1-independent manner. In the presence of CX3CR1, activates integrins by binding to the classical ligand-binding site (site 1) in integrins. In the absence of CX3CR1, binds to a second site (site 2) in integrins which is distinct from site 1 and enhances the binding of other integrin ligands to site 1. Functionally, the soluble form is chemotactic for T-cells and monocytes, but not for neutrophils. In terms of biological role, the membrane-bound form promotes adhesion of those leukocytes to endothelial cells. In Rattus norvegicus (Rat), this protein is Fractalkine (Cx3cl1).